The chain runs to 379 residues: MKILRKNHPLLKIVNHSFIDLPTPSNISSWWNFGSLLGMCLVIQILTGLFLAMHYTSDTTTAFSSVAHICRDVNYGWLIRYLHANGASMFFICLFIHVGRGIYYGSYVLLETWNIGIILLLTTMATAFVGYVLPWGQMSFWGATVITNLLSAIPYIGNTLVEWIWGGFSVDKATLTRFFAFHFILPFIIAAFALVHLLFLHETGSNNPSGLNSDSDKIPFHPYYTTKDLLGIFLLLLVLMILALFFPNVLGDPDNFTPANPLNTPAHIKPEWYFLFAYAILRSIPNKLGGVLALVLSILILATFPLLNTSKQHGLIFRPVTQVIYWIFIANLLVLTWIGGQPVEYPFTTIGQIASITYFAIIIILIPVSNTIENNIIKL.

A run of 4 helical transmembrane segments spans residues 33–53 (FGSL…FLAM), 77–98 (WLIR…FIHV), 113–133 (WNIG…GYVL), and 178–198 (FFAF…VHLL). Heme b is bound by residues His-83 and His-97. The heme b site is built by His-182 and His-196. His-201 contacts a ubiquinone. Helical transmembrane passes span 226 to 246 (TKDL…ALFF), 288 to 308 (LGGV…PLLN), 320 to 340 (VTQV…WIGG), and 347 to 367 (FTTI…ILIP).

This sequence belongs to the cytochrome b family. As to quaternary structure, the cytochrome bc1 complex contains 11 subunits: 3 respiratory subunits (MT-CYB, CYC1 and UQCRFS1), 2 core proteins (UQCRC1 and UQCRC2) and 6 low-molecular weight proteins (UQCRH/QCR6, UQCRB/QCR7, UQCRQ/QCR8, UQCR10/QCR9, UQCR11/QCR10 and a cleavage product of UQCRFS1). This cytochrome bc1 complex then forms a dimer. The cofactor is heme b.

It is found in the mitochondrion inner membrane. Functionally, component of the ubiquinol-cytochrome c reductase complex (complex III or cytochrome b-c1 complex) that is part of the mitochondrial respiratory chain. The b-c1 complex mediates electron transfer from ubiquinol to cytochrome c. Contributes to the generation of a proton gradient across the mitochondrial membrane that is then used for ATP synthesis. The sequence is that of Cytochrome b (MT-CYB) from Akodon paranaensis (Parana grass mouse).